Consider the following 487-residue polypeptide: Sensor protein CseC (487 aa).

Positions 1–11 are enriched in low complexity; it reads MRGNLRRPGPA. Residues 1–41 are disordered; sequence MRGNLRRPGPAGTAGPGRTGIRTSADGGRARPRTGAGTGVR. 2 consecutive transmembrane segments (helical) span residues 63–83 and 185–205; these read ISAA…LVVH and ALII…VLIG. The 57-residue stretch at 206–262 folds into the HAMP domain; the sequence is GQLSRRLRKAAAAANQVAQGERDVRVRDAIGGVVRDETDDLARAVDAMADALQQRIE. Residues 270 to 472 form the Histidine kinase domain; the sequence is DIAHELRTPV…VAVLWLPEHA (203 aa). Phosphohistidine; by autocatalysis is present on histidine 273.

It is found in the cell membrane. It carries out the reaction ATP + protein L-histidine = ADP + protein N-phospho-L-histidine.. The protein is Sensor protein CseC (cseC) of Streptomyces avermitilis (strain ATCC 31267 / DSM 46492 / JCM 5070 / NBRC 14893 / NCIMB 12804 / NRRL 8165 / MA-4680).